The chain runs to 196 residues: MNTFATLAIFISACLAVGSCGGYGSPIGYGGPINVGLRRVSSIGQQSGDGAAAASAAASGGDNGPVEIIAGGAPRYGSSQNLRPILLNSGYHGGLNDNIGRIAQIVGGGRSLGGHLGGHLGGHLGGRIGGNYGGRYIRPRFTVQPAGATLLYPGQNSYRRISSPVEYSKVILPVRAAAPVAKLYIPQNNYGSQVGY.

The signal sequence occupies residues 1 to 16 (MNTFATLAIFISACLA).

Belongs to the chorion protein S19 family.

Its subcellular location is the secreted. Its function is as follows. Chorion membrane (egg shell) protein; plays a role in protecting the egg from the environment. The sequence is that of Chorion protein S19 (Cp19) from Drosophila grimshawi (Hawaiian fruit fly).